The chain runs to 380 residues: Pectinesterase QRT1 (380 aa).

The N-terminal stretch at 1 to 26 (MKVEAFIPAVLLLCFGVMLCLKSSCA) is a signal peptide. 2 N-linked (GlcNAc...) asparagine glycosylation sites follow: asparagine 74 and asparagine 137. Substrate-binding residues include threonine 164 and glutamine 198. Aspartate 221 functions as the Proton donor in the catalytic mechanism. N-linked (GlcNAc...) asparagine glycosylation is present at asparagine 227. An intrachain disulfide couples cysteine 235 to cysteine 255. Aspartate 242 functions as the Nucleophile in the catalytic mechanism. Residues arginine 298 and tryptophan 300 each contribute to the substrate site. N-linked (GlcNAc...) asparagine glycosylation occurs at asparagine 302.

It belongs to the pectinesterase family. In terms of tissue distribution, expressed in flower buds, siliques, developing guard cells, floral nectares, at the stigmatic surface, in the hypocotyl-root transition zone and the area of lateral root emergence. Not expressed in mature leaves.

The protein localises to the secreted. The protein resides in the cell wall. The enzyme catalyses [(1-&gt;4)-alpha-D-galacturonosyl methyl ester](n) + n H2O = [(1-&gt;4)-alpha-D-galacturonosyl](n) + n methanol + n H(+). Its pathway is glycan metabolism; pectin degradation; 2-dehydro-3-deoxy-D-gluconate from pectin: step 1/5. Pectinesterase required for cell type-specific pectin degradation to separate microspores. The polypeptide is Pectinesterase QRT1 (Arabidopsis thaliana (Mouse-ear cress)).